Here is a 257-residue protein sequence, read N- to C-terminus: MIIVLSPAKSLDYDTPPRIKTHTLPDFIERSAVLIETLRKLSPAQIGTLMHISDPLAVLNANRYADWSTEFTADNSKQAVLAFDGDVYGGLDANTLSADDLQFAQQHLRILSGLYGVLRPLDRMQPYRLEMGTRLANPGGKDLYAFWGDDVTLALNALLQADDDPVLVNLASEEYFKVVRPKVLKARIVTPVFEDWKGGRYKIISFYAKRARGLMARYAIEHRIADPRKLKHFDAEGYAFAAEASDDERWVFRRKAA.

Belongs to the UPF0246 family.

This chain is UPF0246 protein RSc2009, found in Ralstonia nicotianae (strain ATCC BAA-1114 / GMI1000) (Ralstonia solanacearum).